Reading from the N-terminus, the 266-residue chain is Ubiquinone biosynthesis protein COQ4 homolog, mitochondrial (266 aa).

Residues His-169, Asp-170, His-173, and Glu-185 each coordinate Zn(2+).

This sequence belongs to the COQ4 family. As to quaternary structure, component of a multi-subunit COQ enzyme complex. The cofactor is Zn(2+).

The protein resides in the mitochondrion inner membrane. The enzyme catalyses a 4-hydroxy-3-methoxy-5-(all-trans-polyprenyl)benzoate + H(+) = a 2-methoxy-6-(all-trans-polyprenyl)phenol + CO2. It functions in the pathway cofactor biosynthesis; ubiquinone biosynthesis. Its function is as follows. Lyase that catalyzes the C1-decarboxylation of 4-hydroxy-3-methoxy-5-(all-trans-polyprenyl)benzoic acid into 2-methoxy-6-(all-trans-polyprenyl)phenol during ubiquinone biosynthesis. This is Ubiquinone biosynthesis protein COQ4 homolog, mitochondrial from Drosophila ananassae (Fruit fly).